We begin with the raw amino-acid sequence, 196 residues long: Holliday junction branch migration complex subunit RuvA (196 aa).

Residues 1–63 (MYDYIKGKLS…DDAHLLFGFH (63 aa)) form a domain I region. The interval 64-142 (TENEKEIFLN…EASGESATSR (79 aa)) is domain II. The flexible linker stretch occupies residues 143–148 (KVSSEQ). The segment at 148–196 (QNSNLEEAMEALLALGYKATELKKVKAFFEGTNETVEQYIKSSLKMLMK) is domain III.

Belongs to the RuvA family. Homotetramer. Forms an RuvA(8)-RuvB(12)-Holliday junction (HJ) complex. HJ DNA is sandwiched between 2 RuvA tetramers; dsDNA enters through RuvA and exits via RuvB. An RuvB hexamer assembles on each DNA strand where it exits the tetramer. Each RuvB hexamer is contacted by two RuvA subunits (via domain III) on 2 adjacent RuvB subunits; this complex drives branch migration. In the full resolvosome a probable DNA-RuvA(4)-RuvB(12)-RuvC(2) complex forms which resolves the HJ.

The protein localises to the cytoplasm. Its function is as follows. The RuvA-RuvB-RuvC complex processes Holliday junction (HJ) DNA during genetic recombination and DNA repair, while the RuvA-RuvB complex plays an important role in the rescue of blocked DNA replication forks via replication fork reversal (RFR). RuvA specifically binds to HJ cruciform DNA, conferring on it an open structure. The RuvB hexamer acts as an ATP-dependent pump, pulling dsDNA into and through the RuvAB complex. HJ branch migration allows RuvC to scan DNA until it finds its consensus sequence, where it cleaves and resolves the cruciform DNA. The sequence is that of Holliday junction branch migration complex subunit RuvA from Streptococcus agalactiae serotype Ia (strain ATCC 27591 / A909 / CDC SS700).